The chain runs to 184 residues: ATP synthase subunit delta (184 aa).

This sequence belongs to the ATPase delta chain family. As to quaternary structure, F-type ATPases have 2 components, F(1) - the catalytic core - and F(0) - the membrane proton channel. F(1) has five subunits: alpha(3), beta(3), gamma(1), delta(1), epsilon(1). CF(0) has four main subunits: a(1), b(1), b'(1) and c(10-14). The alpha and beta chains form an alternating ring which encloses part of the gamma chain. F(1) is attached to F(0) by a central stalk formed by the gamma and epsilon chains, while a peripheral stalk is formed by the delta, b and b' chains.

The protein resides in the cellular thylakoid membrane. In terms of biological role, f(1)F(0) ATP synthase produces ATP from ADP in the presence of a proton or sodium gradient. F-type ATPases consist of two structural domains, F(1) containing the extramembraneous catalytic core and F(0) containing the membrane proton channel, linked together by a central stalk and a peripheral stalk. During catalysis, ATP synthesis in the catalytic domain of F(1) is coupled via a rotary mechanism of the central stalk subunits to proton translocation. This protein is part of the stalk that links CF(0) to CF(1). It either transmits conformational changes from CF(0) to CF(1) or is implicated in proton conduction. This is ATP synthase subunit delta from Gloeothece citriformis (strain PCC 7424) (Cyanothece sp. (strain PCC 7424)).